Consider the following 931-residue polypeptide: Neuropilin-2 (931 aa).

Residues 1-20 constitute a signal peptide (or 22); that stretch reads MDMFPLTWVFLALYFSRHQV. The Extracellular portion of the chain corresponds to 21–864; sequence RGQPDPPCGG…EKSWLYTLDP (844 aa). Intrachain disulfides connect cysteine 28/cysteine 55, cysteine 83/cysteine 105, and cysteine 149/cysteine 175. CUB domains lie at 28–142 and 149–267; these read CGGR…YEIF and CSKN…YYLV. Asparagine 152 and asparagine 157 each carry an N-linked (GlcNAc...) asparagine glycan. Glutamate 197, aspartate 211, and aspartate 252 together coordinate Ca(2+). Cysteine 208 and cysteine 230 form a disulfide bridge. Disulfide bonds link cysteine 277–cysteine 427 and cysteine 434–cysteine 592. F5/8 type C domains lie at 277 to 427 and 434 to 592; these read CNVP…LFGC and CSNM…VLGC. Residues 298 to 310 are compositionally biased toward polar residues; the sequence is TYSDGRWTPQQSR. Residues 298 to 317 form a disordered region; the sequence is TYSDGRWTPQQSRLHGDDNG. The tract at residues 601 to 622 is disordered; the sequence is VETLGPTVKSEETTTPYPTEEE. An N-linked (GlcNAc...) asparagine glycan is attached at asparagine 629. The MAM domain occupies 642-802; sequence SGFNCNFDFL…TDVPLENCME (161 aa). Asparagine 839 carries an N-linked (GlcNAc...) asparagine glycan. Residues 865 to 889 form a helical membrane-spanning segment; sequence ILITIIAMSSLGVLLGATCAGLLLY. Residues 890 to 931 lie on the Cytoplasmic side of the membrane; that stretch reads CTCSYSGLSSRSCTTLENYNFELYDGLKHKVKMNHQKCCSEA.

It belongs to the neuropilin family. In terms of assembly, heterodimer with NRP1. Binds PLXNB1. (Microbial infection) Interacts with human cytomegalovirus proteins gL, UL128, UL130 and UL131A.

The protein localises to the membrane. It localises to the secreted. In terms of biological role, high affinity receptor for semaphorins 3C, 3F, VEGF-165 and VEGF-145 isoforms of VEGF, and the PLGF-2 isoform of PGF. (Microbial infection) Acts as a receptor for human cytomegalovirus pentamer-dependent entry in epithelial and endothelial cells. This Homo sapiens (Human) protein is Neuropilin-2 (NRP2).